A 310-amino-acid polypeptide reads, in one-letter code: Homoserine kinase (310 aa).

Pro91–Cys101 is a binding site for ATP.

Belongs to the GHMP kinase family. Homoserine kinase subfamily.

Its subcellular location is the cytoplasm. It carries out the reaction L-homoserine + ATP = O-phospho-L-homoserine + ADP + H(+). It participates in amino-acid biosynthesis; L-threonine biosynthesis; L-threonine from L-aspartate: step 4/5. Functionally, catalyzes the ATP-dependent phosphorylation of L-homoserine to L-homoserine phosphate. The polypeptide is Homoserine kinase (Shigella flexneri serotype 5b (strain 8401)).